Here is a 294-residue protein sequence, read N- to C-terminus: Cuticle collagen 144 (294 aa).

An N-terminal signal peptide occupies residues 1–30; sequence MEKILVTISTGAASFAVLAVLFTIPSLYNT. The segment covering 100-112 has biased composition (pro residues); it reads TCPPGPPGPPGQP. 2 disordered regions span residues 100–134 and 148–278; these read TCPP…TYAP and PQGP…GNDA. Triple-helical region stretches follow at residues 102–127 and 153–274; these read PPGP…KGED and GPEG…PGLP. 2 stretches are compositionally biased toward low complexity: residues 164-209 and 219-265; these read AGPD…PGQD and APGA…DGQP.

Collagen polypeptide chains are complexed within the cuticle by disulfide bonds and other types of covalent cross-links.

Functionally, nematode cuticles are composed largely of collagen-like proteins. The cuticle functions both as an exoskeleton and as a barrier to protect the worm from its environment. The sequence is that of Cuticle collagen 144 from Caenorhabditis briggsae.